The following is a 431-amino-acid chain: Histidinol dehydrogenase 1 (431 aa).

Residues tyrosine 127, glutamine 188, and asparagine 211 each coordinate NAD(+). Positions 234, 256, and 259 each coordinate substrate. Zn(2+) is bound by residues glutamine 256 and histidine 259. Active-site proton acceptor residues include glutamate 324 and histidine 325. Residues histidine 325, aspartate 358, glutamate 412, and histidine 417 each coordinate substrate. Residue aspartate 358 coordinates Zn(2+). Position 417 (histidine 417) interacts with Zn(2+).

The protein belongs to the histidinol dehydrogenase family. Zn(2+) serves as cofactor.

The catalysed reaction is L-histidinol + 2 NAD(+) + H2O = L-histidine + 2 NADH + 3 H(+). The protein operates within amino-acid biosynthesis; L-histidine biosynthesis; L-histidine from 5-phospho-alpha-D-ribose 1-diphosphate: step 9/9. Functionally, catalyzes the sequential NAD-dependent oxidations of L-histidinol to L-histidinaldehyde and then to L-histidine. This Trichormus variabilis (strain ATCC 29413 / PCC 7937) (Anabaena variabilis) protein is Histidinol dehydrogenase 1.